The sequence spans 624 residues: Glutamine--fructose-6-phosphate aminotransferase [isomerizing] (624 aa).

Residue Cys2 is the Nucleophile; for GATase activity of the active site. A Glutamine amidotransferase type-2 domain is found at 2 to 226; it reads CGIVGYVGQQ…QDQAVVLTAD (225 aa). 2 SIS domains span residues 297–436 and 469–614; these read SDQE…ARGT and LAQR…VDKP. Residue Lys619 is the For Fru-6P isomerization activity of the active site.

As to quaternary structure, homodimer.

The protein resides in the cytoplasm. It catalyses the reaction D-fructose 6-phosphate + L-glutamine = D-glucosamine 6-phosphate + L-glutamate. Its function is as follows. Catalyzes the first step in hexosamine metabolism, converting fructose-6P into glucosamine-6P using glutamine as a nitrogen source. This chain is Glutamine--fructose-6-phosphate aminotransferase [isomerizing], found in Mycolicibacterium paratuberculosis (strain ATCC BAA-968 / K-10) (Mycobacterium paratuberculosis).